A 144-amino-acid polypeptide reads, in one-letter code: MSGNVLKVQLRSEHGIAPTKGSVYAAGYDIYASADYVIPAMGQGMVPTDISFTVPEGTYGRIAPRSGLAVKHGIQTGAGVVDRDYTGEVKIILFNHSQKDFEIKRGDRVAQLILEKIVDDAEVVVVESLEDSQRGAGGFGSTGK.

Residues Ser66, Gly79, Asp82, Tyr85, Lys90, Arg134, Phe139, and Gly140 each coordinate dUMP.

Belongs to the dUTPase family. Homotrimer. It depends on Mg(2+) as a cofactor.

It catalyses the reaction dUTP + H2O = dUMP + diphosphate + H(+). It participates in pyrimidine metabolism; dUMP biosynthesis; dUMP from dCTP (dUTP route): step 2/2. Functionally, involved in nucleotide metabolism via production of dUMP, the immediate precursor of thymidine nucleotides, and decreases the intracellular concentration of dUTP so that uracil cannot be incorporated into DNA. This is Deoxyuridine 5'-triphosphate nucleotidohydrolase (DUT1) from Candida glabrata (strain ATCC 2001 / BCRC 20586 / JCM 3761 / NBRC 0622 / NRRL Y-65 / CBS 138) (Yeast).